The following is a 171-amino-acid chain: Adenine phosphoribosyltransferase (171 aa).

It belongs to the purine/pyrimidine phosphoribosyltransferase family. In terms of assembly, homodimer.

It localises to the cytoplasm. The catalysed reaction is AMP + diphosphate = 5-phospho-alpha-D-ribose 1-diphosphate + adenine. Its pathway is purine metabolism; AMP biosynthesis via salvage pathway; AMP from adenine: step 1/1. In terms of biological role, catalyzes a salvage reaction resulting in the formation of AMP, that is energically less costly than de novo synthesis. The protein is Adenine phosphoribosyltransferase of Citrifermentans bemidjiense (strain ATCC BAA-1014 / DSM 16622 / JCM 12645 / Bem) (Geobacter bemidjiensis).